The following is a 185-amino-acid chain: uncharacterized protein (185 aa).

The signal sequence occupies residues 1-29 (MKLFSRTSLVALGTAAAITLSGVTAPAFA). The disordered stretch occupies residues 41 to 66 (KTAEDNTPEAPGASTPLKLEQPGTIT).

In terms of processing, glycosylated; by Pmt.

The protein localises to the secreted. This is an uncharacterized protein from Corynebacterium glutamicum (strain ATCC 13032 / DSM 20300 / JCM 1318 / BCRC 11384 / CCUG 27702 / LMG 3730 / NBRC 12168 / NCIMB 10025 / NRRL B-2784 / 534).